The chain runs to 277 residues: Transcription factor HES-4-B (277 aa).

The interval 1–44 is disordered; the sequence is MPADSMEKPTASPIAGAPANSAQTPDKPKSASEHRKSSKPIMEK. Residues 26–35 show a composition bias toward basic and acidic residues; that stretch reads DKPKSASEHR. The bHLH domain occupies 34–91; the sequence is HRKSSKPIMEKRRRARINESLGQLKTLILDALKKDSSRHSKLEKADILEMTVKHLRNL. The Orange domain occupies 110 to 143; the sequence is YRAGFNECMNEVTRFLSTCEGVNTEVRTRLLGHL. A disordered region spans residues 258–277; sequence VSPLGGSTRADSAESVWRPW. Positions 274–277 match the WRPW motif motif; sequence WRPW.

In terms of assembly, transcription repression requires formation of a complex with a corepressor protein of the Groucho/TLE family. Interacts with the bHLH protein hes6; this interaction may inhibit the transcriptional repressor activity. Binds DNA in the form of a heterodimer with the bHLH protein hey1/hrt1. Interacts (via Orange domain) with id3 (via HLH domain). In terms of tissue distribution, dynamically expressed in the borders of several tissue territories. Expressed in the pre-placodal ectoderm (PPE) from gastrula stage. During gastrulation, expressed in the deep layer of the dorsal lip, the Spemann organizer and three distinct regions in the prospective neuroectoderm: neural plate border, presumptive floor plate/notoplate and anterior neural plate. At later stages, expression is localized to the anterior of the prechordal plate, the presomitic mesoderm, neural tube, neural crest derivatives and several tissues of the central nervous system, with expression in the developing floor plate continues to at least the tadpole stage. From the early tailbud stage, expressed in the dorsoanterior region of the developing pronephros. During early tailbud stages, broadly expressed within the pronephric mesoderm. and in the sensorial layer of the ectoderm covering the pronephros anlagen. During late tailbud to early tadpole stages, expressed in the ventral region of the pronephros. Expression remains in the proximal and distal tubules at late tadpole stages (stage 35).

Its subcellular location is the nucleus. Functionally, transcriptional repressor. Binds DNA on N-box motifs: 5'-CACNAG-3'. Promotes floor plate development and prechordal plate development. Required for lens development as early as the stage of lens field formation, partly through regulation of gene expression of the cell cycle inhibitor cdknx/p27(xic1). Required for formation of the neural crest downstream of multiple signaling pathways, and acts at the neural plate border via both DNA-binding dependent and independent mechanisms; acts in a DNA-binding dependent manner to repress pro-apoptotic and neural crest differentiation genes, including id3, delta1, and cdknx/p27(xic1), and thus promote the cell survival of neural plate border cells and maintain them in an undifferentiated state. Represses transcription of id3, at least in part through the repression of bmp4. On the other hand, acts in a DNA-independent manner separate from the transcriptional repressor function, to stimulate cell proliferation and promote neural crest formation. Via this DNA-independent route, acts in neurulae upstream of stat3 to transiently up-regulate the notch ligand dll1/delta1, which in turn up-regulates id3 expression. Then interacts directly with id3, which blocks the transcriptional repressor function of hes4-B/hairy2b to allow the progression of neural crest progenitors through specification and differentiation. Also acts via repressor-dependent and repressor-independent mechanisms in early gastrulae to establish the prospective anterior prechordal mesoderm identity in the Spemann organizer; induces specific genes independently from direct transcriptional regulation, and represses the genes specific for neighboring tissues through direct transcriptional repression. Modulates lateral inhibition during notch signaling and regulates the cell context dependent effects of notch (which can have inhibitory, permissive or enhancing roles in muscle or neural differentiation). Inhibits myogenesis. This is Transcription factor HES-4-B (hes4-b) from Xenopus laevis (African clawed frog).